The sequence spans 342 residues: S-adenosylmethionine:tRNA ribosyltransferase-isomerase (342 aa).

Belongs to the QueA family. As to quaternary structure, monomer.

The protein resides in the cytoplasm. The enzyme catalyses 7-aminomethyl-7-carbaguanosine(34) in tRNA + S-adenosyl-L-methionine = epoxyqueuosine(34) in tRNA + adenine + L-methionine + 2 H(+). The protein operates within tRNA modification; tRNA-queuosine biosynthesis. Its function is as follows. Transfers and isomerizes the ribose moiety from AdoMet to the 7-aminomethyl group of 7-deazaguanine (preQ1-tRNA) to give epoxyqueuosine (oQ-tRNA). The protein is S-adenosylmethionine:tRNA ribosyltransferase-isomerase of Listeria welshimeri serovar 6b (strain ATCC 35897 / DSM 20650 / CCUG 15529 / CIP 8149 / NCTC 11857 / SLCC 5334 / V8).